Reading from the N-terminus, the 163-residue chain is Peptide methionine sulfoxide reductase MsrA 1 (163 aa).

Cysteine 21 is an active-site residue.

Belongs to the MsrA Met sulfoxide reductase family.

The catalysed reaction is L-methionyl-[protein] + [thioredoxin]-disulfide + H2O = L-methionyl-(S)-S-oxide-[protein] + [thioredoxin]-dithiol. It carries out the reaction [thioredoxin]-disulfide + L-methionine + H2O = L-methionine (S)-S-oxide + [thioredoxin]-dithiol. Its function is as follows. Has an important function as a repair enzyme for proteins that have been inactivated by oxidation. Catalyzes the reversible oxidation-reduction of methionine sulfoxide in proteins to methionine. The polypeptide is Peptide methionine sulfoxide reductase MsrA 1 (msrA1) (Nostoc sp. (strain PCC 7120 / SAG 25.82 / UTEX 2576)).